The primary structure comprises 384 residues: Putative glutamate--cysteine ligase 2-2 (384 aa).

The protein belongs to the glutamate--cysteine ligase type 2 family. YbdK subfamily.

It carries out the reaction L-cysteine + L-glutamate + ATP = gamma-L-glutamyl-L-cysteine + ADP + phosphate + H(+). Its function is as follows. ATP-dependent carboxylate-amine ligase which exhibits weak glutamate--cysteine ligase activity. This is Putative glutamate--cysteine ligase 2-2 from Rubrobacter xylanophilus (strain DSM 9941 / JCM 11954 / NBRC 16129 / PRD-1).